We begin with the raw amino-acid sequence, 1024 residues long: Beta-galactosidase (1024 aa).

Asn103 and Asp202 together coordinate substrate. Asp202 contacts Na(+). The Mg(2+) site is built by Glu417, His419, and Glu462. Substrate is bound by residues Glu462 and 538–541 (EYAH). Glu462 acts as the Proton donor in catalysis. The active-site Nucleophile is the Glu538. Asn598 provides a ligand contact to Mg(2+). Phe602 and Asn605 together coordinate Na(+). Residues Asn605 and Trp1000 each coordinate substrate.

It belongs to the glycosyl hydrolase 2 family. As to quaternary structure, homotetramer. Mg(2+) serves as cofactor. The cofactor is Na(+).

The catalysed reaction is Hydrolysis of terminal non-reducing beta-D-galactose residues in beta-D-galactosides.. The sequence is that of Beta-galactosidase from Escherichia coli O157:H7.